The primary structure comprises 211 residues: B3 domain-containing protein At5g42700 (211 aa).

The segment at residues phenylalanine 110 to glycine 201 is a DNA-binding region (TF-B3).

It localises to the nucleus. The polypeptide is B3 domain-containing protein At5g42700 (Arabidopsis thaliana (Mouse-ear cress)).